Here is a 484-residue protein sequence, read N- to C-terminus: tRNA sulfurtransferase (484 aa).

Residues 63 to 167 enclose the THUMP domain; that stretch reads QAFGERLACI…GDKLYMVTKR (105 aa). ATP contacts are provided by residues 185–186, Lys267, Gly289, and Gln298; that span reads LI. A disulfide bond links Cys346 and Cys458. The 79-residue stretch at 406-484 folds into the Rhodanese domain; that stretch reads IDTNEVVIDI…GYHNVKVYRP (79 aa). Cys458 functions as the Cysteine persulfide intermediate in the catalytic mechanism.

This sequence belongs to the ThiI family.

The protein localises to the cytoplasm. It carries out the reaction [ThiI sulfur-carrier protein]-S-sulfanyl-L-cysteine + a uridine in tRNA + 2 reduced [2Fe-2S]-[ferredoxin] + ATP + H(+) = [ThiI sulfur-carrier protein]-L-cysteine + a 4-thiouridine in tRNA + 2 oxidized [2Fe-2S]-[ferredoxin] + AMP + diphosphate. The enzyme catalyses [ThiS sulfur-carrier protein]-C-terminal Gly-Gly-AMP + S-sulfanyl-L-cysteinyl-[cysteine desulfurase] + AH2 = [ThiS sulfur-carrier protein]-C-terminal-Gly-aminoethanethioate + L-cysteinyl-[cysteine desulfurase] + A + AMP + 2 H(+). It participates in cofactor biosynthesis; thiamine diphosphate biosynthesis. Functionally, catalyzes the ATP-dependent transfer of a sulfur to tRNA to produce 4-thiouridine in position 8 of tRNAs, which functions as a near-UV photosensor. Also catalyzes the transfer of sulfur to the sulfur carrier protein ThiS, forming ThiS-thiocarboxylate. This is a step in the synthesis of thiazole, in the thiamine biosynthesis pathway. The sulfur is donated as persulfide by IscS. This chain is tRNA sulfurtransferase, found in Shewanella sp. (strain ANA-3).